Consider the following 271-residue polypeptide: MTYRGTRKSPCCSPPPRCGPPLPSGPAGSALGPPSSGAEEEMTKEQVYLREFQPADQEFARRIFYEGIKERILSSAFRGLKYQPLLQSVYAVIIIMCFVVTKSLLVTCCMPLFLLGMRYYYSRKIILNHLECALRTDMSDIEQYYMKQPGSCFWVAVLEGKVVGIVAARGNEEDNVVELRRMSVDSNYRGKGIAKALGRKVLEFAMLNHYSSIVLGTTAVKIAAHKLYESLGFKHVGVVEHHIVPGMTHSLLERLFFQLRYHRYCLQLREE.

Residues 1–38 (MTYRGTRKSPCCSPPPRCGPPLPSGPAGSALGPPSSGA) are disordered. Residues 12–24 (CSPPPRCGPPLPS) show a composition bias toward pro residues. The span at 25 to 37 (GPAGSALGPPSSG) shows a compositional bias: low complexity. Residues 89-109 (VYAVIIIMCFVVTKSLLVTCC) traverse the membrane as a helical segment. An N-acetyltransferase domain is found at 115-258 (LGMRYYYSRK…HSLLERLFFQ (144 aa)).

Belongs to the NAT8 family.

The protein localises to the cytoplasm. It localises to the microsome membrane. The protein resides in the mitochondrion membrane. Its subcellular location is the endoplasmic reticulum membrane. It carries out the reaction L-aspartate + acetyl-CoA = N-acetyl-L-aspartate + CoA + H(+). Functionally, catalyzes the synthesis of N-acetylaspartate acid (NAA) from L-aspartate and acetyl-CoA. The sequence is that of N-acetylaspartate synthetase (nat8l) from Xenopus tropicalis (Western clawed frog).